Here is a 107-residue protein sequence, read N- to C-terminus: Iron-binding protein IscA (107 aa).

Cys-35, Cys-99, and Cys-101 together coordinate Fe cation.

This sequence belongs to the HesB/IscA family. As to quaternary structure, homodimer; may form tetramers and higher multimers. It depends on Fe cation as a cofactor.

Functionally, is able to transfer iron-sulfur clusters to apo-ferredoxin. Multiple cycles of [2Fe2S] cluster formation and transfer are observed, suggesting that IscA acts catalytically. Recruits intracellular free iron so as to provide iron for the assembly of transient iron-sulfur cluster in IscU in the presence of IscS, L-cysteine and the thioredoxin reductase system TrxA/TrxB. The polypeptide is Iron-binding protein IscA (Yersinia enterocolitica serotype O:8 / biotype 1B (strain NCTC 13174 / 8081)).